The sequence spans 461 residues: Bifunctional protein GlmU (461 aa).

The tract at residues 1-232 (MNLQIIILAA…SFEVQGINNR (232 aa)) is pyrophosphorylase. UDP-N-acetyl-alpha-D-glucosamine-binding positions include 8 to 11 (LAAG), K22, Q73, and 78 to 79 (GT). D102 is a Mg(2+) binding site. Residues G142, E157, and N230 each contribute to the UDP-N-acetyl-alpha-D-glucosamine site. N230 contributes to the Mg(2+) binding site. A linker region spans residues 233–253 (QQLQQLERTWQQRAANQLMEK). The interval 254-461 (GATLADANRF…WKRPVKRERD (208 aa)) is N-acetyltransferase. UDP-N-acetyl-alpha-D-glucosamine contacts are provided by R336 and K354. H366 functions as the Proton acceptor in the catalytic mechanism. UDP-N-acetyl-alpha-D-glucosamine contacts are provided by Y369 and N380. Acetyl-CoA-binding positions include A383, 389–390 (NY), S408, and A426.

The protein in the N-terminal section; belongs to the N-acetylglucosamine-1-phosphate uridyltransferase family. This sequence in the C-terminal section; belongs to the transferase hexapeptide repeat family. Homotrimer. Mg(2+) is required as a cofactor.

It is found in the cytoplasm. The enzyme catalyses alpha-D-glucosamine 1-phosphate + acetyl-CoA = N-acetyl-alpha-D-glucosamine 1-phosphate + CoA + H(+). The catalysed reaction is N-acetyl-alpha-D-glucosamine 1-phosphate + UTP + H(+) = UDP-N-acetyl-alpha-D-glucosamine + diphosphate. It participates in nucleotide-sugar biosynthesis; UDP-N-acetyl-alpha-D-glucosamine biosynthesis; N-acetyl-alpha-D-glucosamine 1-phosphate from alpha-D-glucosamine 6-phosphate (route II): step 2/2. It functions in the pathway nucleotide-sugar biosynthesis; UDP-N-acetyl-alpha-D-glucosamine biosynthesis; UDP-N-acetyl-alpha-D-glucosamine from N-acetyl-alpha-D-glucosamine 1-phosphate: step 1/1. The protein operates within bacterial outer membrane biogenesis; LPS lipid A biosynthesis. Functionally, catalyzes the last two sequential reactions in the de novo biosynthetic pathway for UDP-N-acetylglucosamine (UDP-GlcNAc). The C-terminal domain catalyzes the transfer of acetyl group from acetyl coenzyme A to glucosamine-1-phosphate (GlcN-1-P) to produce N-acetylglucosamine-1-phosphate (GlcNAc-1-P), which is converted into UDP-GlcNAc by the transfer of uridine 5-monophosphate (from uridine 5-triphosphate), a reaction catalyzed by the N-terminal domain. The sequence is that of Bifunctional protein GlmU from Legionella pneumophila (strain Paris).